Reading from the N-terminus, the 364-residue chain is DNA replication and repair protein RecF (364 aa).

30 to 37 (GNNAQGKT) contributes to the ATP binding site.

This sequence belongs to the RecF family.

It localises to the cytoplasm. Functionally, the RecF protein is involved in DNA metabolism; it is required for DNA replication and normal SOS inducibility. RecF binds preferentially to single-stranded, linear DNA. It also seems to bind ATP. The chain is DNA replication and repair protein RecF from Clostridium botulinum (strain 657 / Type Ba4).